We begin with the raw amino-acid sequence, 209 residues long: Ribosomal RNA large subunit methyltransferase E (209 aa).

Glycine 63, tryptophan 65, aspartate 83, aspartate 99, and aspartate 124 together coordinate S-adenosyl-L-methionine. Lysine 164 acts as the Proton acceptor in catalysis.

It belongs to the class I-like SAM-binding methyltransferase superfamily. RNA methyltransferase RlmE family.

The protein localises to the cytoplasm. It catalyses the reaction uridine(2552) in 23S rRNA + S-adenosyl-L-methionine = 2'-O-methyluridine(2552) in 23S rRNA + S-adenosyl-L-homocysteine + H(+). Its function is as follows. Specifically methylates the uridine in position 2552 of 23S rRNA at the 2'-O position of the ribose in the fully assembled 50S ribosomal subunit. The sequence is that of Ribosomal RNA large subunit methyltransferase E from Buchnera aphidicola subsp. Cinara cedri (strain Cc).